The primary structure comprises 977 residues: DNA-directed RNA polymerase 3B, chloroplastic (977 aa).

Residues 1 to 71 (MASTASYSPS…NNIQSQTTVC (71 aa)) constitute a chloroplast transit peptide. Active-site residues include aspartate 678, lysine 753, and aspartate 910.

The protein belongs to the phage and mitochondrial RNA polymerase family.

The protein localises to the plastid. It localises to the chloroplast. The enzyme catalyses RNA(n) + a ribonucleoside 5'-triphosphate = RNA(n+1) + diphosphate. In terms of biological role, DNA-dependent RNA polymerase catalyzes the transcription of DNA into RNA using the four ribonucleoside triphosphates as substrates. This chain is DNA-directed RNA polymerase 3B, chloroplastic (RPOT3-TOM), found in Nicotiana tabacum (Common tobacco).